Reading from the N-terminus, the 221-residue chain is Small ribosomal subunit protein uS3 (221 aa).

Positions Ile-39 to Lys-108 constitute a KH type-2 domain.

The protein belongs to the universal ribosomal protein uS3 family. Part of the 30S ribosomal subunit. Forms a tight complex with proteins S10 and S14.

Binds the lower part of the 30S subunit head. Binds mRNA in the 70S ribosome, positioning it for translation. The polypeptide is Small ribosomal subunit protein uS3 (Clostridium botulinum (strain Alaska E43 / Type E3)).